A 547-amino-acid polypeptide reads, in one-letter code: Sodium-coupled neutral amino acid transporter 4 (547 aa).

The interval Met1 to Ser26 is disordered. Over Met1–Gly104 the chain is Extracellular. The residue at position 49 (Ser49) is a Phosphoserine. Residues Ile105–Leu125 form a helical membrane-spanning segment. At Leu126–Lys151 the chain is on the cytoplasmic side. The chain crosses the membrane as a helical span at residues Ile152–Ile172. Topologically, residues Ile173–Tyr195 are extracellular. The helical transmembrane segment at Pro196–Leu216 threads the bilayer. Residues Lys217–Gly220 are Cytoplasmic-facing. A helical membrane pass occupies residues Tyr221–Ile241. Topologically, residues Tyr242–Thr332 are extracellular. A disulfide bridge connects residues Cys249 and Cys321. Asn260, Asn264, and Asn276 each carry an N-linked (GlcNAc...) asparagine glycan. Residues Ala333–Tyr353 form a helical membrane-spanning segment. The Cytoplasmic segment spans residues Ser354–Asn369. Residues Ile370–Phe390 form a helical membrane-spanning segment. Residues Tyr391–Pro411 lie on the Extracellular side of the membrane. A helical transmembrane segment spans residues Leu412–Phe432. The Cytoplasmic segment spans residues Pro433–His453. A helical membrane pass occupies residues Phe454 to Ile474. The Extracellular portion of the chain corresponds to Lys475–Tyr476. A helical transmembrane segment spans residues Ile477–Phe497. Topologically, residues Tyr498–Gly514 are cytoplasmic. A helical membrane pass occupies residues Ala515 to Ile535. Residues Asp536–His547 lie on the Extracellular side of the membrane.

Belongs to the amino acid/polyamine transporter 2 family. In terms of processing, the disulfide bond plays an important role in substrate transport, but has no effect on trafficking to the cell surface.

It localises to the cell membrane. The protein resides in the cell projection. The protein localises to the microvillus membrane. It carries out the reaction L-methionine(in) + Na(+)(in) = L-methionine(out) + Na(+)(out). The enzyme catalyses L-asparagine(in) + Na(+)(in) = L-asparagine(out) + Na(+)(out). The catalysed reaction is L-threonine(in) + Na(+)(in) = L-threonine(out) + Na(+)(out). It catalyses the reaction L-serine(in) + Na(+)(in) = L-serine(out) + Na(+)(out). It carries out the reaction glycine(in) + Na(+)(in) = glycine(out) + Na(+)(out). The enzyme catalyses L-alanine(in) + Na(+)(in) = L-alanine(out) + Na(+)(out). The catalysed reaction is L-glutamine(in) + Na(+)(in) = L-glutamine(out) + Na(+)(out). It catalyses the reaction L-histidine(in) + Na(+)(in) = L-histidine(out) + Na(+)(out). It carries out the reaction L-cysteine(in) + Na(+)(in) = L-cysteine(out) + Na(+)(out). The enzyme catalyses L-proline(in) + Na(+)(in) = L-proline(out) + Na(+)(out). Its function is as follows. Symporter that cotransports neutral amino acids and sodium ions from the extraccellular to the intracellular side of the cell membrane. The transport is electrogenic, pH dependent and partially tolerates substitution of Na(+) by Li(+). Preferentially transports smaller amino acids, such as glycine, L-alanine, L-serine, L-asparagine and L-threonine, followed by L-cysteine, L-histidine, L-proline and L-glutamine and L-methionine. This chain is Sodium-coupled neutral amino acid transporter 4, found in Pongo abelii (Sumatran orangutan).